We begin with the raw amino-acid sequence, 167 residues long: UPF0587 protein F46B6.12 (167 aa).

Residues Cys-34, Cys-37, Cys-68, and Cys-71 each coordinate Zn(2+).

Belongs to the UPF0587 family.

This chain is UPF0587 protein F46B6.12, found in Caenorhabditis elegans.